A 573-amino-acid polypeptide reads, in one-letter code: DNA ligase (573 aa).

Glu250 lines the ATP pocket. Catalysis depends on Lys252, which acts as the N6-AMP-lysine intermediate. The ATP site is built by Arg257, Arg272, Glu301, Phe342, Arg432, and Lys438.

The protein belongs to the ATP-dependent DNA ligase family. It depends on Mg(2+) as a cofactor.

It carries out the reaction ATP + (deoxyribonucleotide)n-3'-hydroxyl + 5'-phospho-(deoxyribonucleotide)m = (deoxyribonucleotide)n+m + AMP + diphosphate.. Its function is as follows. DNA ligase that seals nicks in double-stranded DNA during DNA replication, DNA recombination and DNA repair. This chain is DNA ligase, found in Methanococcus vannielii (strain ATCC 35089 / DSM 1224 / JCM 13029 / OCM 148 / SB).